Reading from the N-terminus, the 99-residue chain is MVTDMKCNRKRWSREDREFIEANVGKMTVEEMAEKLKVATTALRAHARRHGISLCVYRISEHDKYLCRELYKEGLDIHVIARKMELSNRAVSSIVYSGY.

Its subcellular location is the host cytoplasm. This is an uncharacterized protein from Escherichia phage Mu (Bacteriophage Mu).